The chain runs to 487 residues: L-tartrate/succinate antiporter (487 aa).

14 consecutive transmembrane segments (helical) span residues 10 to 30 (YLAP…AGLE), 33 to 53 (TWLY…EPVP), 54 to 74 (GAVV…WLLF), 93 to 113 (WAVS…FMFG), 137 to 157 (TLFL…VTPS), 189 to 209 (IGSY…AIFL), 230 to 250 (LSWG…VLLV), 292 to 312 (LMVG…AAMV), 313 to 333 (GYSV…DIVS), 340 to 360 (VFFW…TGFI), 370 to 390 (SLSG…FYLL), 393 to 413 (FFAS…AAAL), 418 to 438 (IPLP…SILT), and 465 to 485 (IFGL…MPVV).

This sequence belongs to the SLC13A/DASS transporter (TC 2.A.47) family. DIT1 subfamily.

The protein localises to the cell inner membrane. The catalysed reaction is (2R,3R)-tartrate(out) + succinate(in) = (2R,3R)-tartrate(in) + succinate(out). Its function is as follows. Catalyzes the uptake of tartrate in exchange for intracellular succinate. Essential for anaerobic L-tartrate fermentation. This chain is L-tartrate/succinate antiporter (ttdT), found in Shigella dysenteriae serotype 1 (strain Sd197).